A 393-amino-acid chain; its full sequence is Uroporphyrinogen decarboxylase, chloroplastic (393 aa).

The tract at residues 1 to 64 (MATACPPLSL…AGERNQREEV (64 aa)) is disordered. The segment covering 23-37 (AGPNAGSSRPSAAAP) has biased composition (low complexity). The segment covering 38–50 (SERRSWRRPRPDG) has biased composition (basic and acidic residues). Residues 73-77 (RQAGR), Phe92, Ser122, Asp123, Tyr200, Ser255, and His370 contribute to the substrate site.

This sequence belongs to the uroporphyrinogen decarboxylase family. Homodimer.

The protein localises to the plastid. Its subcellular location is the chloroplast. It catalyses the reaction uroporphyrinogen III + 4 H(+) = coproporphyrinogen III + 4 CO2. It participates in porphyrin-containing compound metabolism; protoporphyrin-IX biosynthesis; coproporphyrinogen-III from 5-aminolevulinate: step 4/4. In terms of biological role, catalyzes the decarboxylation of four acetate groups of uroporphyrinogen-III to yield coproporphyrinogen-III. The protein is Uroporphyrinogen decarboxylase, chloroplastic (LES22) of Zea mays (Maize).